We begin with the raw amino-acid sequence, 878 residues long: Alanine--tRNA ligase (878 aa).

Residues His-567, His-571, Cys-669, and His-673 each contribute to the Zn(2+) site.

The protein belongs to the class-II aminoacyl-tRNA synthetase family. It depends on Zn(2+) as a cofactor.

It localises to the cytoplasm. It carries out the reaction tRNA(Ala) + L-alanine + ATP = L-alanyl-tRNA(Ala) + AMP + diphosphate. Catalyzes the attachment of alanine to tRNA(Ala) in a two-step reaction: alanine is first activated by ATP to form Ala-AMP and then transferred to the acceptor end of tRNA(Ala). Also edits incorrectly charged Ser-tRNA(Ala) and Gly-tRNA(Ala) via its editing domain. In Rickettsia conorii (strain ATCC VR-613 / Malish 7), this protein is Alanine--tRNA ligase.